Reading from the N-terminus, the 91-residue chain is UPF0250 protein PSEEN4821 (91 aa).

The protein belongs to the UPF0250 family.

The chain is UPF0250 protein PSEEN4821 from Pseudomonas entomophila (strain L48).